Consider the following 24-residue polypeptide: Ascaphin-3 (24 aa).

In terms of tissue distribution, expressed by the skin glands.

The protein localises to the secreted. Functionally, antimicrobial peptide that shows higher potency against Gram-negative bacteria than against Gram-positive bacteria. Has a very week hemolytic activity. The polypeptide is Ascaphin-3 (Ascaphus truei (Coastal tailed frog)).